Here is a 453-residue protein sequence, read N- to C-terminus: Bifunctional protein GlmU (453 aa).

The pyrophosphorylase stretch occupies residues 1–225 (MHAHVILAAG…AEEALGVNTR (225 aa)). Residues 7–10 (LAAG), Lys-21, Gln-72, and 77–78 (GT) each bind UDP-N-acetyl-alpha-D-glucosamine. Residue Asp-102 coordinates Mg(2+). Residues Gly-138, Glu-152, Asn-167, and Asn-223 each contribute to the UDP-N-acetyl-alpha-D-glucosamine site. Asn-223 lines the Mg(2+) pocket. A linker region spans residues 226 to 246 (EELARVEGVLLRRLRAEWMGK). The interval 247-453 (GVRMILPETI…GYALRKLGEG (207 aa)) is N-acetyltransferase. Arg-329 and Lys-347 together coordinate UDP-N-acetyl-alpha-D-glucosamine. His-359 serves as the catalytic Proton acceptor. Positions 362 and 373 each coordinate UDP-N-acetyl-alpha-D-glucosamine. Acetyl-CoA-binding positions include Ala-376, 382–383 (NY), Ser-401, Ala-419, and Arg-436.

The protein in the N-terminal section; belongs to the N-acetylglucosamine-1-phosphate uridyltransferase family. It in the C-terminal section; belongs to the transferase hexapeptide repeat family. Homotrimer. Mg(2+) is required as a cofactor.

Its subcellular location is the cytoplasm. It carries out the reaction alpha-D-glucosamine 1-phosphate + acetyl-CoA = N-acetyl-alpha-D-glucosamine 1-phosphate + CoA + H(+). It catalyses the reaction N-acetyl-alpha-D-glucosamine 1-phosphate + UTP + H(+) = UDP-N-acetyl-alpha-D-glucosamine + diphosphate. It functions in the pathway nucleotide-sugar biosynthesis; UDP-N-acetyl-alpha-D-glucosamine biosynthesis; N-acetyl-alpha-D-glucosamine 1-phosphate from alpha-D-glucosamine 6-phosphate (route II): step 2/2. The protein operates within nucleotide-sugar biosynthesis; UDP-N-acetyl-alpha-D-glucosamine biosynthesis; UDP-N-acetyl-alpha-D-glucosamine from N-acetyl-alpha-D-glucosamine 1-phosphate: step 1/1. Its pathway is bacterial outer membrane biogenesis; LPS lipid A biosynthesis. Catalyzes the last two sequential reactions in the de novo biosynthetic pathway for UDP-N-acetylglucosamine (UDP-GlcNAc). The C-terminal domain catalyzes the transfer of acetyl group from acetyl coenzyme A to glucosamine-1-phosphate (GlcN-1-P) to produce N-acetylglucosamine-1-phosphate (GlcNAc-1-P), which is converted into UDP-GlcNAc by the transfer of uridine 5-monophosphate (from uridine 5-triphosphate), a reaction catalyzed by the N-terminal domain. This chain is Bifunctional protein GlmU, found in Thermus thermophilus (strain ATCC BAA-163 / DSM 7039 / HB27).